The following is a 955-amino-acid chain: Protein translocase subunit SecA (955 aa).

ATP is bound by residues Gln-87, 105 to 109 (GEGKT), and Asp-494. The interval 861–955 (ASPAPAAPRP…KKAPRTKRKR (95 aa)) is disordered. Low complexity predominate over residues 874–888 (QEAAQQAQGTAAPSA). The span at 943 to 955 (SKGKKAPRTKRKR) shows a compositional bias: basic residues.

This sequence belongs to the SecA family. Monomer and homodimer. Part of the essential Sec protein translocation apparatus which comprises SecA, SecYEG and auxiliary proteins SecDF. Other proteins may also be involved.

Its subcellular location is the cell membrane. The protein resides in the cytoplasm. It catalyses the reaction ATP + H2O + cellular proteinSide 1 = ADP + phosphate + cellular proteinSide 2.. Its function is as follows. Part of the Sec protein translocase complex. Interacts with the SecYEG preprotein conducting channel. Has a central role in coupling the hydrolysis of ATP to the transfer of proteins into and across the cell membrane, serving as an ATP-driven molecular motor driving the stepwise translocation of polypeptide chains across the membrane. The polypeptide is Protein translocase subunit SecA (Rhodococcus jostii (strain RHA1)).